A 69-amino-acid chain; its full sequence is MAILHVDEIRDMTAAEREVELEQLETELLNEKAVLAAGGAPENPGRIGELKRTIARVKTIQREEGDFDE.

Belongs to the universal ribosomal protein uL29 family.

This Natronomonas pharaonis (strain ATCC 35678 / DSM 2160 / CIP 103997 / JCM 8858 / NBRC 14720 / NCIMB 2260 / Gabara) (Halobacterium pharaonis) protein is Large ribosomal subunit protein uL29.